We begin with the raw amino-acid sequence, 412 residues long: Glucose-1-phosphate adenylyltransferase (412 aa).

Alpha-D-glucose 1-phosphate is bound by residues tyrosine 98, glycine 163, 178–179, and serine 189; that span reads EK.

This sequence belongs to the bacterial/plant glucose-1-phosphate adenylyltransferase family. In terms of assembly, homotetramer.

The catalysed reaction is alpha-D-glucose 1-phosphate + ATP + H(+) = ADP-alpha-D-glucose + diphosphate. Its pathway is glycan biosynthesis; glycogen biosynthesis. Involved in the biosynthesis of ADP-glucose, a building block required for the elongation reactions to produce glycogen. Catalyzes the reaction between ATP and alpha-D-glucose 1-phosphate (G1P) to produce pyrophosphate and ADP-Glc. The protein is Glucose-1-phosphate adenylyltransferase of Thermosipho melanesiensis (strain DSM 12029 / CIP 104789 / BI429).